We begin with the raw amino-acid sequence, 61 residues long: Alpha-conotoxin CnIJ (61 aa).

Positions Met1–Ser17 are cleaved as a signal peptide. Positions Phe18 to Asn44 are excised as a propeptide. Disulfide bonds link Cys47–Cys52 and Cys48–Cys59. Cysteine amide is present on Cys59.

The protein belongs to the conotoxin A superfamily. Expressed by the venom duct.

It is found in the secreted. This Conus consors (Singed cone) protein is Alpha-conotoxin CnIJ.